The sequence spans 207 residues: Protein GrpE (207 aa).

Belongs to the GrpE family. In terms of assembly, homodimer.

Its subcellular location is the cytoplasm. Participates actively in the response to hyperosmotic and heat shock by preventing the aggregation of stress-denatured proteins, in association with DnaK and GrpE. It is the nucleotide exchange factor for DnaK and may function as a thermosensor. Unfolded proteins bind initially to DnaJ; upon interaction with the DnaJ-bound protein, DnaK hydrolyzes its bound ATP, resulting in the formation of a stable complex. GrpE releases ADP from DnaK; ATP binding to DnaK triggers the release of the substrate protein, thus completing the reaction cycle. Several rounds of ATP-dependent interactions between DnaJ, DnaK and GrpE are required for fully efficient folding. The chain is Protein GrpE from Pelodictyon phaeoclathratiforme (strain DSM 5477 / BU-1).